A 166-amino-acid polypeptide reads, in one-letter code: MHENQQPQTEAFELSAAEREAIEHEKHHYEDPRAASIEALKIVQKQRGWVPDGAIYAIADVLGIPASDVEGVATFYSQIFRQPVGRHVIRYCDSVVCHITGYQGIQAALEKNLNIKPGQTTFDGRFTLLPTCCLGNCDKGPNMMIDEDTHSHLTPEAIPELLERYK.

Residues Cys92, Cys97, Cys133, and Cys137 each contribute to the [2Fe-2S] cluster site.

Belongs to the complex I 24 kDa subunit family. Composed of 13 different subunits. Subunits NuoCD, E, F, and G constitute the peripheral sector of the complex. It depends on [2Fe-2S] cluster as a cofactor.

It carries out the reaction a quinone + NADH + 5 H(+)(in) = a quinol + NAD(+) + 4 H(+)(out). Its function is as follows. NDH-1 shuttles electrons from NADH, via FMN and iron-sulfur (Fe-S) centers, to quinones in the respiratory chain. The immediate electron acceptor for the enzyme in this species is believed to be ubiquinone. Couples the redox reaction to proton translocation (for every two electrons transferred, four hydrogen ions are translocated across the cytoplasmic membrane), and thus conserves the redox energy in a proton gradient. The polypeptide is NADH-quinone oxidoreductase subunit E (nuoE) (Salmonella typhi).